Here is a 348-residue protein sequence, read N- to C-terminus: Anthranilate phosphoribosyltransferase (348 aa).

Residues G81, 84–85, T89, 91–94, 109–117, and S121 contribute to the 5-phospho-alpha-D-ribose 1-diphosphate site; these read GD, NIST, and KHGNRAMSS. G81 provides a ligand contact to anthranilate. S93 is a binding site for Mg(2+). N112 lines the anthranilate pocket. R167 provides a ligand contact to anthranilate. Positions 226 and 227 each coordinate Mg(2+).

This sequence belongs to the anthranilate phosphoribosyltransferase family. Homodimer. It depends on Mg(2+) as a cofactor.

The enzyme catalyses N-(5-phospho-beta-D-ribosyl)anthranilate + diphosphate = 5-phospho-alpha-D-ribose 1-diphosphate + anthranilate. It functions in the pathway amino-acid biosynthesis; L-tryptophan biosynthesis; L-tryptophan from chorismate: step 2/5. In terms of biological role, catalyzes the transfer of the phosphoribosyl group of 5-phosphorylribose-1-pyrophosphate (PRPP) to anthranilate to yield N-(5'-phosphoribosyl)-anthranilate (PRA). In Thermomicrobium roseum (strain ATCC 27502 / DSM 5159 / P-2), this protein is Anthranilate phosphoribosyltransferase.